A 347-amino-acid polypeptide reads, in one-letter code: uncharacterized protein (347 aa).

The first 21 residues, 1-21 (MRYRIFLLFFFALLPTSLVWA), serve as a signal peptide directing secretion.

This is an uncharacterized protein from Escherichia coli (strain K12).